The chain runs to 200 residues: Probable molybdenum cofactor guanylyltransferase (200 aa).

Residues 9–11 (LAG), Lys21, Asp69, and Asp100 contribute to the GTP site. Asp100 provides a ligand contact to Mg(2+).

This sequence belongs to the MobA family. It depends on Mg(2+) as a cofactor.

It is found in the cytoplasm. The catalysed reaction is Mo-molybdopterin + GTP + H(+) = Mo-molybdopterin guanine dinucleotide + diphosphate. Its function is as follows. Transfers a GMP moiety from GTP to Mo-molybdopterin (Mo-MPT) cofactor (Moco or molybdenum cofactor) to form Mo-molybdopterin guanine dinucleotide (Mo-MGD) cofactor. This Bacillus cereus (strain ATCC 10987 / NRS 248) protein is Probable molybdenum cofactor guanylyltransferase.